The sequence spans 155 residues: Large ribosomal subunit protein uL22c (155 aa).

It belongs to the universal ribosomal protein uL22 family. Part of the 50S ribosomal subunit.

It localises to the plastid. Its subcellular location is the chloroplast. This protein binds specifically to 23S rRNA. Functionally, the globular domain of the protein is located near the polypeptide exit tunnel on the outside of the subunit, while an extended beta-hairpin is found that lines the wall of the exit tunnel in the center of the 70S ribosome. The sequence is that of Large ribosomal subunit protein uL22c (rpl22) from Coffea arabica (Arabian coffee).